A 281-amino-acid chain; its full sequence is MLLEFTKMHGLGNDFMVVDLISQRAYLDTATIQRLADRHFGVGFDQLLIVEPPDVPEADFKYRIFNADGSEVEQCGNGVRCFARFVHERHLTNKTNITVQTKAGIVKPELGQNGWVRVNMGYPKFLPNEIPFVAEEPEALYTLELANDQNISIDVVNMGNPHAVTIVPDVLTADVAGIGPQVESHKRFPERVNAGFMQVIDDKHVRLRVFERGVGETLACGTGACAAAVSGMRRGLLANSVEVELAGGKLQIEWQEGDVVWMTGPTTHVYDGRLDLRYFQG.

Residues Asn-13, Gln-46, and Asn-66 each contribute to the substrate site. Cys-75 functions as the Proton donor in the catalytic mechanism. Residues 76–77 (GN), Asn-160, Asn-193, and 211–212 (ER) each bind substrate. Cys-220 (proton acceptor) is an active-site residue. 221–222 (GT) contacts substrate.

Belongs to the diaminopimelate epimerase family. Homodimer.

It is found in the cytoplasm. It carries out the reaction (2S,6S)-2,6-diaminopimelate = meso-2,6-diaminopimelate. It participates in amino-acid biosynthesis; L-lysine biosynthesis via DAP pathway; DL-2,6-diaminopimelate from LL-2,6-diaminopimelate: step 1/1. In terms of biological role, catalyzes the stereoinversion of LL-2,6-diaminopimelate (L,L-DAP) to meso-diaminopimelate (meso-DAP), a precursor of L-lysine and an essential component of the bacterial peptidoglycan. The sequence is that of Diaminopimelate epimerase from Acinetobacter baumannii (strain AB307-0294).